A 338-amino-acid polypeptide reads, in one-letter code: uncharacterized protein (338 aa).

An N-terminal signal peptide occupies residues 1–29; that stretch reads MIKQLCKNITICTLALSTTFTVLPATSFA.

This sequence belongs to the aerolysin family.

This is an uncharacterized protein from Staphylococcus aureus (strain USA300).